The following is a 98-amino-acid chain: Homeobox protein SMOX-4 (98 aa).

Residues 37–96 (SFRNRTAFTDYQLICLEREFSHIQYLSRIDRIHLAQNLNLTEKQVKIWFQNRRVRWRKRN) constitute a DNA-binding region (homeobox).

Its subcellular location is the nucleus. The sequence is that of Homeobox protein SMOX-4 (SMOX-4) from Schistosoma mansoni (Blood fluke).